The following is a 446-amino-acid chain: MLKLILMMIFISPICFMQGLFWMVHNLLFVITFVLILMNFCLNYFVNISYFMGFDVLSYGLILLSFWICSLMIVASESVNKYNNYKNLFLFNVLMLLIFLVLTFSSMNLFMFYLFFESSLIPTLFLILGWGYQPERLQAGVYLLFYTLLVSLPLLVGIFYLYKNCNTMNFYLLSNYMFNCNLLYLAMILAFLVKMPMFLVHLWLPKAHVEAPVSGSMILAGIMLKLGGYGLLAVFSFLQLIGLKYNYIWVSISLIGGVLISLVCLRQTDLKALIAYSSVAHMGIVLGGLMTLSYWGLSGSYTLMIGHGLCSSGLFCLANITYERLGSRSLLINKGLLNFMPSMTLWWFLLSVCNMAAPPSLNLLGEISLLNSIVSWSWLTMISLSFLSFFSAAYTLYLYAYSQHGKIFSGVYSFSGGNIREYFLLFLHWFPLNLLILKSEVCLFWI.

14 helical membrane-spanning segments follow: residues 4–24 (LILM…FWMV), 28–48 (LFVI…FVNI), 56–76 (VLSY…IVAS), 88–105 (LFLF…LTFS), 109–131 (LFMF…LGWG), 141–161 (VYLL…IFYL), 182–202 (LLYL…LVHL), 218–238 (ILAG…FSFL), 245–265 (YNYI…LVCL), 272–292 (ALIA…LMTL), 297–317 (LSGS…LFCL), 330–350 (LLIN…WFLL), 373–393 (IVSW…FSAA), and 426–446 (FLHW…LFWI).

Belongs to the complex I subunit 4 family.

It is found in the mitochondrion membrane. It catalyses the reaction a ubiquinone + NADH + 5 H(+)(in) = a ubiquinol + NAD(+) + 4 H(+)(out). In terms of biological role, core subunit of the mitochondrial membrane respiratory chain NADH dehydrogenase (Complex I) that is believed to belong to the minimal assembly required for catalysis. Complex I functions in the transfer of electrons from NADH to the respiratory chain. The immediate electron acceptor for the enzyme is believed to be ubiquinone. The chain is NADH-ubiquinone oxidoreductase chain 4 (ND4) from Ceratitis capitata (Mediterranean fruit fly).